The sequence spans 248 residues: Amphiregulin (248 aa).

The signal sequence occupies residues methionine 1 to alanine 26. The propeptide occupies leucine 27–glutamine 99. 3 disordered regions span residues leucine 29–glycine 48, valine 57–serine 77, and valine 100–lysine 136. The segment covering serine 58–serine 70 has biased composition (polar residues). A compositionally biased stretch (basic and acidic residues) spans valine 100–lysine 116. N-linked (GlcNAc...) asparagine glycosylation is present at asparagine 106. The segment covering proline 117–lysine 136 has biased composition (basic residues). Residues lysine 135 to glycine 175 enclose the EGF-like domain. 3 disulfides stabilise this stretch: cysteine 139–cysteine 152, cysteine 147–cysteine 163, and cysteine 165–cysteine 174. Residues isoleucine 192–isoleucine 215 traverse the membrane as a helical segment. N-linked (GlcNAc...) asparagine glycosylation occurs at asparagine 241.

The protein belongs to the amphiregulin family. In terms of assembly, the immature precursor interacts with CNIH.

It is found in the membrane. Its function is as follows. Ligand of the EGF receptor/EGFR. Autocrine growth factor as well as a mitogen for a broad range of target cells including astrocytes, Schwann cells and fibroblasts. The polypeptide is Amphiregulin (Areg) (Mus musculus (Mouse)).